The primary structure comprises 37 residues: Chorion class CB protein PCH12 (37 aa).

Residues 1–26 are central domain; sequence DGIFPTVGAGDVWYGCGDGAVGIVAE. Positions 27 to 37 are right arm; it reads TPFASTTTNPA.

This sequence belongs to the chorion protein family.

Its function is as follows. This protein is one of many from the eggshell of the silk moth. The protein is Chorion class CB protein PCH12 of Antheraea polyphemus (Polyphemus moth).